The following is a 432-amino-acid chain: Hexane cyclase pydB (432 aa).

The N-terminal stretch at 1–20 (MMHQSLGLGLVVFVAAPVVA) is a signal peptide. N-linked (GlcNAc...) asparagine glycans are attached at residues asparagine 59, asparagine 78, asparagine 153, and asparagine 308.

The protein belongs to the Diels-Alderase family.

It functions in the pathway mycotoxin biosynthesis. Its function is as follows. Hexane cyclase; part of the gene cluster that mediates the biosynthesis of pyrrocidines, fungal natural products containing a macrocyclic para-cyclophane connected to a decahydrofluorene ring system that show potent antibiotic activities toward Gram-negative bacteria. Within the pathway, pydB functions synergistically with pydE, pydX and pydZ to form the cyclophane. The pathway begins with the PKS-NRPS pydA which, with the help of the trans-enoyl reductase pydC, synthesizes the polyketide-tyrosyl acyl thioester product which can be reductively off-loaded by the terminal reductase (R) domain in pydA. The alpha/beta hydrolase pydG is then required to catalyze the subsequent Knoevenagel condensation that affords the 3-pyrrolin-2-one ring, whereas the four proteins pydB, pydE, pydX and pydZ then function synergistically to form the cyclophane. PydB and the membrane-bound pydX and pydZ are lipid-binding proteins that can sequester and mold the pdyG product into the inverse S-shape. Binding of the medium chain reductase pydE to the complex would trigger the cascade oxidative cyclization. PydY is involved the Diels-Alder cycloaddition that forms the decahydrofluorene core. Additional non-enzymatic hydroxylation yields pyrrocidine A2 which can be further reduced into pyrrocidine B by an endogenous reductase. This Acremonium sp protein is Hexane cyclase pydB.